Consider the following 255-residue polypeptide: PABIR family member 2 (255 aa).

A disordered region spans residues methionine 1–asparagine 24. Alanine 2 carries the post-translational modification N-acetylalanine. Phosphoserine occurs at positions 25, 33, 50, and 58. A Phosphothreonine modification is found at threonine 112. Phosphoserine is present on residues serine 115 and serine 119. Arginine 122 carries the omega-N-methylarginine modification. Serine 145 is subject to Phosphoserine. Disordered stretches follow at residues leucine 169 to serine 196 and serine 219 to alanine 238. Over residues arginine 174 to proline 184 the composition is skewed to basic and acidic residues.

It belongs to the FAM122 family.

The polypeptide is PABIR family member 2 (Mus musculus (Mouse)).